A 434-amino-acid chain; its full sequence is Adenylosuccinate synthetase (434 aa).

Residues 11 to 17 (GDEGKGK) and 39 to 41 (GHT) contribute to the GTP site. The active-site Proton acceptor is aspartate 12. Residues aspartate 12 and glycine 39 each coordinate Mg(2+). IMP is bound by residues 12–15 (DEGK), 37–40 (NAGH), threonine 134, arginine 148, asparagine 230, threonine 245, and arginine 309. Residue histidine 40 is the Proton donor of the active site. Residue 305–311 (VTTGRKR) participates in substrate binding. GTP-binding positions include arginine 311, 337-339 (KLD), and 419-421 (GTG).

Belongs to the adenylosuccinate synthetase family. In terms of assembly, homodimer. Requires Mg(2+) as cofactor.

It is found in the cytoplasm. It carries out the reaction IMP + L-aspartate + GTP = N(6)-(1,2-dicarboxyethyl)-AMP + GDP + phosphate + 2 H(+). Its pathway is purine metabolism; AMP biosynthesis via de novo pathway; AMP from IMP: step 1/2. Functionally, plays an important role in the de novo pathway and in the salvage pathway of purine nucleotide biosynthesis. Catalyzes the first committed step in the biosynthesis of AMP from IMP. This Lachancea thermotolerans (strain ATCC 56472 / CBS 6340 / NRRL Y-8284) (Yeast) protein is Adenylosuccinate synthetase.